The sequence spans 249 residues: Triosephosphate isomerase (249 aa).

N9–K11 provides a ligand contact to substrate. Catalysis depends on H95, which acts as the Electrophile. The active-site Proton acceptor is E167. Substrate contacts are provided by residues G173, S213, and G234–G235.

The protein belongs to the triosephosphate isomerase family. In terms of assembly, homodimer.

The protein localises to the cytoplasm. It catalyses the reaction D-glyceraldehyde 3-phosphate = dihydroxyacetone phosphate. It participates in carbohydrate biosynthesis; gluconeogenesis. It functions in the pathway carbohydrate degradation; glycolysis; D-glyceraldehyde 3-phosphate from glycerone phosphate: step 1/1. Involved in the gluconeogenesis. Catalyzes stereospecifically the conversion of dihydroxyacetone phosphate (DHAP) to D-glyceraldehyde-3-phosphate (G3P). The protein is Triosephosphate isomerase of Dictyoglomus turgidum (strain DSM 6724 / Z-1310).